The following is a 519-amino-acid chain: Arabinose import ATP-binding protein AraG 2 (519 aa).

ABC transporter domains lie at 29–264 and 264–515; these read LSLD…MVGR and RSIE…LIKL. Residue 61 to 68 participates in ATP binding; sequence GENGAGKS.

The protein belongs to the ABC transporter superfamily. Arabinose importer (TC 3.A.1.2.2) family. As to quaternary structure, the complex is composed of two ATP-binding proteins (AraG), two transmembrane proteins (AraH) and a solute-binding protein (AraF).

It is found in the cell inner membrane. It catalyses the reaction L-arabinose(out) + ATP + H2O = L-arabinose(in) + ADP + phosphate + H(+). Functionally, part of the ABC transporter complex AraFGH involved in arabinose import. Responsible for energy coupling to the transport system. The polypeptide is Arabinose import ATP-binding protein AraG 2 (Burkholderia ambifaria (strain ATCC BAA-244 / DSM 16087 / CCUG 44356 / LMG 19182 / AMMD) (Burkholderia cepacia (strain AMMD))).